Here is a 249-residue protein sequence, read N- to C-terminus: MKKLVLLRHGESIWNQENRFTGWTDVDLTPKGLKEAEEAGRLLRENGFSFDIAYTSLLKRAIRTLWIALDEMDQMWTPIELNWRLNERHYGALQGLNKAETAKQYGDEQVLVWRRSYDIRPPSITINDERYPGFDLRYRNMSSGDIPLAESLKDTVARFLPYWNQSIAPQIKAEKKVIIAAHGNSLRALIKHLDNISDQDILNCNIPTGIPLVYELDDDLKPLNSYYLGDAGQIGEAISAVANQGKSGA.

Residues 8–15 (RHGESIWN), 21–22 (TG), R60, 87–90 (ERHY), K98, 114–115 (RR), and 183–184 (GN) each bind substrate. The active-site Tele-phosphohistidine intermediate is H9. E87 functions as the Proton donor/acceptor in the catalytic mechanism.

This sequence belongs to the phosphoglycerate mutase family. BPG-dependent PGAM subfamily. As to quaternary structure, homodimer.

It catalyses the reaction (2R)-2-phosphoglycerate = (2R)-3-phosphoglycerate. It functions in the pathway carbohydrate degradation; glycolysis; pyruvate from D-glyceraldehyde 3-phosphate: step 3/5. Catalyzes the interconversion of 2-phosphoglycerate and 3-phosphoglycerate. This chain is 2,3-bisphosphoglycerate-dependent phosphoglycerate mutase 2, found in Nitrosomonas europaea (strain ATCC 19718 / CIP 103999 / KCTC 2705 / NBRC 14298).